Reading from the N-terminus, the 202-residue chain is Cryptic protein (202 aa).

A signal peptide spans 1–35; that stretch reads MRANSPTQGISLKMHQARPLFLVTVALQLIGLGYS. Asn65 is a glycosylation site (N-linked (GlcNAc...) asparagine). The 30-residue stretch at 94 to 123 folds into the EGF-like domain; sequence PVSRCCHNGGTCVLGSFCVCPAYFTGRYCE. Cystine bridges form between Cys98–Cys105, Cys99–Cys111, and Cys113–Cys122. A lipid anchor (GPI-anchor amidated aspartate) is attached at Asp166. A propeptide spans 167-202 (removed in mature form); it reads LKSFLSSGARGSRECSIPSLLLLVLCLLLQGVAGKG.

It belongs to the EGF-CFC (Cripto-1/FRL1/Cryptic) family. In terms of processing, N-glycosylated. In terms of tissue distribution, no expressed in adult tissues.

The protein resides in the cell membrane. Its subcellular location is the secreted. Its function is as follows. Nodal coreceptor involved in the correct establishment of the left-right axis. May play a role in mesoderm and/or neural patterning during gastrulation. This Mus musculus (Mouse) protein is Cryptic protein (Cfc1).